We begin with the raw amino-acid sequence, 738 residues long: NAD(P)H-quinone oxidoreductase subunit 5, chloroplastic (738 aa).

17 consecutive transmembrane segments (helical) span residues 9 to 29, 39 to 59, 89 to 109, 125 to 145, 147 to 167, 185 to 205, 219 to 239, 258 to 278, 280 to 300, 327 to 347, 354 to 374, 396 to 416, 425 to 445, 542 to 562, 610 to 630, 691 to 711, and 717 to 737; these read WVIPLLPLPVIMSMGFGLFLI, IWAFPSILLLSIAMVFSLHLS, VDPLTSIMLILITTVGILVLI, FVYISFFNTSMLGLVTSSNLI, IYFFWELVGMCSYLLIGFWFT, GDFGLLLGILGFFWITGSLEF, NGINSLLTTLCAFLLFLGAVA, TPISALIHAATMVAAGIFLLA, LLPLFISLPLLMSFISLVGTI, LGYMMLALGIGSYQAALFHLI, ALLFLGSGSVIHSMEPLVGYS, TTFLCGTLSLCGIPPLACFWS, WLYSPFFGIIASFTAGLTAFY, LFPLLILLLFTLFIGSIGIPF, SLAIFGLFIAYIFYGSAYSFF, GVIDGIINGVGLAGFCIGEEI, and GRISSYLFFFLCYVSLFLFFI.

Belongs to the complex I subunit 5 family. In terms of assembly, NDH is composed of at least 16 different subunits, 5 of which are encoded in the nucleus.

Its subcellular location is the plastid. It localises to the chloroplast thylakoid membrane. The catalysed reaction is a plastoquinone + NADH + (n+1) H(+)(in) = a plastoquinol + NAD(+) + n H(+)(out). It carries out the reaction a plastoquinone + NADPH + (n+1) H(+)(in) = a plastoquinol + NADP(+) + n H(+)(out). In terms of biological role, NDH shuttles electrons from NAD(P)H:plastoquinone, via FMN and iron-sulfur (Fe-S) centers, to quinones in the photosynthetic chain and possibly in a chloroplast respiratory chain. The immediate electron acceptor for the enzyme in this species is believed to be plastoquinone. Couples the redox reaction to proton translocation, and thus conserves the redox energy in a proton gradient. The sequence is that of NAD(P)H-quinone oxidoreductase subunit 5, chloroplastic (ndhF) from Saccharum officinarum (Sugarcane).